The sequence spans 233 residues: MFDSSQYPYNCFNYDADDYPAGSSDEDKRLTRPAYSYIALIAMAIQQSPAGRVTLSGIYDFIMRKFPYYRANQRAWQNSIRHNLSLNSCFVKVPRSEGHEKGKGNYWTFAGGCESLLDLFENGNYRRRRRRRGPKREGPRGPRAGGAQGPSGPSEPPAAQGRLAPDSAGEGAPGREPPASPAPPGKEHPRDLKFSIDYILSSPDPFPGLKPPCLAQEGRYPRLENVGLHFWTM.

A DNA-binding region (fork-head) is located at residues 32 to 130; sequence RPAYSYIALI…ENGNYRRRRR (99 aa). Residues 125 to 134 show a composition bias toward basic residues; sequence YRRRRRRRGP. Residues 125 to 198 are disordered; that stretch reads YRRRRRRRGP…PRDLKFSIDY (74 aa). Over residues 175–184 the composition is skewed to pro residues; the sequence is REPPASPAPP. Residues 185-194 are compositionally biased toward basic and acidic residues; sequence GKEHPRDLKF.

Its subcellular location is the nucleus. Probable transcriptional regulator. The protein is Forkhead box protein L3 of Homo sapiens (Human).